A 629-amino-acid polypeptide reads, in one-letter code: tRNA uridine 5-carboxymethylaminomethyl modification enzyme MnmG (629 aa).

FAD contacts are provided by residues 13 to 18 (GGGHAG), V125, and S180. NAD(+) is bound at residue 273 to 287 (GPRYCPSIEDKVMRF). Q370 contacts FAD.

The protein belongs to the MnmG family. Homodimer. Heterotetramer of two MnmE and two MnmG subunits. FAD is required as a cofactor.

It localises to the cytoplasm. In terms of biological role, NAD-binding protein involved in the addition of a carboxymethylaminomethyl (cmnm) group at the wobble position (U34) of certain tRNAs, forming tRNA-cmnm(5)s(2)U34. This is tRNA uridine 5-carboxymethylaminomethyl modification enzyme MnmG from Salmonella agona (strain SL483).